A 165-amino-acid chain; its full sequence is MAKMNLSSYILILTFSLFSQGILLSASKSIRNLDDDMVFNTFRLGKGFQKEDTAEKSVIAPSLEQYKNDESSFMNEEENKVSKNTGSKHNFLNHGLPLNLAIKPYLALKGSVAFPAENGVQNTESTQEKREIGDEENSAKFPIGRRDFDMLRCMLGRVYRPCWQV.

The signal sequence occupies residues 1–21 (MAKMNLSSYILILTFSLFSQG). Isoleucine 143 carries the post-translational modification Isoleucine amide. Cysteine 153 and cysteine 162 form a disulfide bridge.

The protein belongs to the melanin-concentrating hormone family. Differentially processed in the brain and in peripheral organs producing two neuropeptides; NEI and MCH. A third peptide, NGE, may also be produced. Preferential processing in neurons by prohormone convertase 2 (PC2) generates NEI. MCH is generated in neurons of the lateral hypothalmic area by several prohormone convertases including PC1/3, PC2 and PC5/6. In terms of tissue distribution, predominantly expressed in lateral hypothalamus, also detected in pallidum, neocortex and cerebellum. Also found in thymus, brown adipose tissue, duodenum and testis (spermatogonia, early spermatocytes and Sertoli cells). No expression in peripheral blood. In brain exclusively mature MCH and NEI peptides are present. In peripheral tissues a large product, encompassing the NEI and MCH domains of the precursor, is found predominantly.

It is found in the secreted. In terms of biological role, MCH may act as a neurotransmitter or neuromodulator in a broad array of neuronal functions directed toward the regulation of goal-directed behavior, such as food intake, and general arousal. May also have a role in spermatocyte differentiation. This Homo sapiens (Human) protein is Pro-MCH (PMCH).